The primary structure comprises 88 residues: Small ribosomal subunit protein uS15c (88 aa).

The protein belongs to the universal ribosomal protein uS15 family. In terms of assembly, part of the 30S ribosomal subunit.

Its subcellular location is the plastid. The protein localises to the chloroplast. This Cycas taitungensis (Prince sago) protein is Small ribosomal subunit protein uS15c (rps15).